We begin with the raw amino-acid sequence, 240 residues long: Nuclear receptor-interacting protein 3 (240 aa).

This chain is Nuclear receptor-interacting protein 3 (Nrip3), found in Mus musculus (Mouse).